A 191-amino-acid polypeptide reads, in one-letter code: MLSSIKCVLVGDSAVGKTSLLVRFTSETFPEAYKPTVYENTGVDVLMDGIQISLGLWDTAGNDAFRSIRPLSYQQADVVLMCYSVANHNSFLNLKNKWIGEVRSNLPCTPVLVVATQTDQREVGPHRASCVNAIEGKRLAQDVRAKGYLECSALSNRGVQQVFECAVRTAVNQARRRNRRRFFSINECKIL.

11-18 (GDSAVGKT) provides a ligand contact to GTP. The Effector region motif lies at 33-41 (YKPTVYENT). 58-62 (DTAGN) provides a ligand contact to GTP. Residues 73 to 86 (YQQADVVLMCYSVA) form an interaction with ZAP70 region. 116–119 (TQTD) contacts GTP. A Cysteine methyl ester modification is found at Cys-188. The S-geranylgeranyl cysteine moiety is linked to residue Cys-188. The propeptide at 189 to 191 (KIL) is removed in mature form.

Belongs to the small GTPase superfamily. Rho family. Interacts with GDI1 and GDI2. Interacts with ZAP70 (via SH2 domains) and the interaction is enhanced by its phosphorylation by LCK. Interacts with SYK and the interaction is enhanced by its phosphorylation by FYN. Post-translationally, phosphorylated on tyrosine by LCK. Phosphorylated by FYN. Phosphorylation enhances the interactions with ZAP70 and SYK and is critical for its function in thymocyte development.

The protein localises to the cytoplasm. It is found in the cell membrane. Its function is as follows. Binds GTP but lacks intrinsic GTPase activity and is resistant to Rho-specific GTPase-activating proteins. Inhibits the activation of NF-kappa-B by TNF and IKKB and the activation of CRK/p38 by TNF. Inhibits activities of RAC1, RHOA and CDC42. Negatively regulates leukotriene production in neutrophils. Negative regulator of hematopoietic progenitor cell proliferation, survival and migration. Critical regulator of thymocyte development and T-cell antigen receptor (TCR) signaling by mediating recruitment and activation of ZAP70. Required for phosphorylation of CD3Z, membrane translocation of ZAP70 and subsequent activation of the ZAP70-mediated pathways. Essential for efficient beta-selection and positive selection by promoting the ZAP70-dependent phosphorylation of the LAT signalosome during pre-TCR and TCR signaling. Crucial for thymocyte maturation during DN3 to DN4 transition and during positive selection. Plays critical roles in mast cell function by facilitating phosphorylation of SYK in Fc epsilon RI-mediated signal transduction. Essential for the phosphorylation of LAT, LCP2, PLCG1 and PLCG2 and for Ca(2+) mobilization in mast cells. The chain is Rho-related GTP-binding protein RhoH (RHOH) from Bos taurus (Bovine).